We begin with the raw amino-acid sequence, 304 residues long: Ribosomal RNA large subunit methyltransferase F (304 aa).

Belongs to the methyltransferase superfamily. METTL16/RlmF family.

Its subcellular location is the cytoplasm. The catalysed reaction is adenosine(1618) in 23S rRNA + S-adenosyl-L-methionine = N(6)-methyladenosine(1618) in 23S rRNA + S-adenosyl-L-homocysteine + H(+). Its function is as follows. Specifically methylates the adenine in position 1618 of 23S rRNA. This is Ribosomal RNA large subunit methyltransferase F from Klebsiella pneumoniae (strain 342).